A 228-amino-acid polypeptide reads, in one-letter code: Cytidylate kinase (228 aa).

11 to 19 (GPAGTGKSS) contacts ATP.

This sequence belongs to the cytidylate kinase family. Type 1 subfamily.

Its subcellular location is the cytoplasm. It catalyses the reaction CMP + ATP = CDP + ADP. The enzyme catalyses dCMP + ATP = dCDP + ADP. The polypeptide is Cytidylate kinase (Mycolicibacterium paratuberculosis (strain ATCC BAA-968 / K-10) (Mycobacterium paratuberculosis)).